The chain runs to 502 residues: Cytochrome P450 71B10 (502 aa).

A helical membrane pass occupies residues Met-1–Lys-21. A heme-binding site is contributed by Cys-443.

Belongs to the cytochrome P450 family. The cofactor is heme.

The protein localises to the membrane. The polypeptide is Cytochrome P450 71B10 (CYP71B10) (Arabidopsis thaliana (Mouse-ear cress)).